We begin with the raw amino-acid sequence, 320 residues long: Nucleotide-binding protein Psyc_0118 (320 aa).

32-39 (GRSGSGKT) lines the ATP pocket. 82-85 (DIRT) contacts GTP.

Belongs to the RapZ-like family.

Functionally, displays ATPase and GTPase activities. The chain is Nucleotide-binding protein Psyc_0118 from Psychrobacter arcticus (strain DSM 17307 / VKM B-2377 / 273-4).